The following is a 319-amino-acid chain: Cobalamin biosynthesis protein CobD (319 aa).

Helical transmembrane passes span 55–75 (AVMW…VLAL), 78–98 (EIHP…VLAG), 153–173 (VDGI…LAMA), and 296–316 (LMWV…CLLV).

The protein belongs to the CobD/CbiB family.

Its subcellular location is the cell membrane. Its pathway is cofactor biosynthesis; adenosylcobalamin biosynthesis. Functionally, converts cobyric acid to cobinamide by the addition of aminopropanol on the F carboxylic group. This chain is Cobalamin biosynthesis protein CobD, found in Citrobacter koseri (strain ATCC BAA-895 / CDC 4225-83 / SGSC4696).